The sequence spans 196 residues: Glycerol-3-phosphate acyltransferase (196 aa).

A run of 5 helical transmembrane segments spans residues 2–22 (GWWL…SYLI), 51–71 (VVGG…VFIA), 80–100 (LVSL…FMKF), 112–132 (IIFC…LVIV), and 137–156 (YASL…GYLF).

The protein belongs to the PlsY family. As to quaternary structure, probably interacts with PlsX.

Its subcellular location is the cell inner membrane. It carries out the reaction an acyl phosphate + sn-glycerol 3-phosphate = a 1-acyl-sn-glycero-3-phosphate + phosphate. It functions in the pathway lipid metabolism; phospholipid metabolism. Its function is as follows. Catalyzes the transfer of an acyl group from acyl-phosphate (acyl-PO(4)) to glycerol-3-phosphate (G3P) to form lysophosphatidic acid (LPA). This enzyme utilizes acyl-phosphate as fatty acyl donor, but not acyl-CoA or acyl-ACP. This chain is Glycerol-3-phosphate acyltransferase, found in Thermotoga petrophila (strain ATCC BAA-488 / DSM 13995 / JCM 10881 / RKU-1).